Reading from the N-terminus, the 54-residue chain is MSPQTETKASVGFKAGVKDYKLNYYTPDYVTKDTDILAAFRVSPQPGVPPEEAG.

Positions 1–2 are excised as a propeptide; that stretch reads MS. Pro-3 bears the N-acetylproline mark. At Lys-14 the chain carries N6,N6,N6-trimethyllysine.

It belongs to the RuBisCO large chain family. Type I subfamily. Heterohexadecamer of 8 large chains and 8 small chains.

The protein resides in the plastid. Its subcellular location is the chloroplast. The enzyme catalyses 2 (2R)-3-phosphoglycerate + 2 H(+) = D-ribulose 1,5-bisphosphate + CO2 + H2O. It catalyses the reaction D-ribulose 1,5-bisphosphate + O2 = 2-phosphoglycolate + (2R)-3-phosphoglycerate + 2 H(+). RuBisCO catalyzes two reactions: the carboxylation of D-ribulose 1,5-bisphosphate, the primary event in carbon dioxide fixation, as well as the oxidative fragmentation of the pentose substrate in the photorespiration process. Both reactions occur simultaneously and in competition at the same active site. This chain is Ribulose bisphosphate carboxylase large chain (rbcL), found in Ilex ciliospinosa (Sichuan holly).